We begin with the raw amino-acid sequence, 431 residues long: RbAp48-related WD40 repeat-containing protein prw1 (431 aa).

WD repeat units lie at residues 127-159, 182-213, 232-263, 279-310, 323-354, and 380-411; these read SHPE…LVFD, KHTQ…SCWD, SHEK…HVHD, AHSG…ALWD, GHED…LVWD, and GHTS…QIWT.

It belongs to the WD repeat HIR1 family. As to quaternary structure, heterotetramer of alp13, clr6, prw1 and pst2.

The protein resides in the nucleus. Functionally, has a role in chromatin assembly and chromosome segregation. Involved in the deacetylation of histones. In Schizosaccharomyces pombe (strain 972 / ATCC 24843) (Fission yeast), this protein is RbAp48-related WD40 repeat-containing protein prw1 (prw1).